A 272-amino-acid chain; its full sequence is Ribonuclease 3 (272 aa).

The tract at residues 1–22 is disordered; the sequence is MSLQFLRSEASDGAGETSDASS. The RNase III domain maps to 31 to 162; that stretch reads TATHLARLTG…LVGAIYLDQG (132 aa). Mg(2+) is bound at residue E75. Residue D79 is part of the active site. Mg(2+) contacts are provided by D148 and E151. Residue E151 is part of the active site. In terms of domain architecture, DRBM spans 189-258; it reads NYKSRLIEYT…AKEAMKRLES (70 aa).

Belongs to the ribonuclease III family. In terms of assembly, homodimer. Requires Mg(2+) as cofactor.

Its subcellular location is the cytoplasm. The enzyme catalyses Endonucleolytic cleavage to 5'-phosphomonoester.. Digests double-stranded RNA. Involved in the processing of primary rRNA transcript to yield the immediate precursors to the large and small rRNAs (23S and 16S). Processes some mRNAs, and tRNAs when they are encoded in the rRNA operon. Processes pre-crRNA and tracrRNA of type II CRISPR loci if present in the organism. This chain is Ribonuclease 3, found in Chlorobaculum tepidum (strain ATCC 49652 / DSM 12025 / NBRC 103806 / TLS) (Chlorobium tepidum).